The following is a 113-amino-acid chain: Hydrogenase maturation factor HypA (113 aa).

H2 is a Ni(2+) binding site. Positions 73, 76, 89, and 92 each coordinate Zn(2+).

It belongs to the HypA/HybF family.

In terms of biological role, involved in the maturation of [NiFe] hydrogenases. Required for nickel insertion into the metal center of the hydrogenase. This Beijerinckia indica subsp. indica (strain ATCC 9039 / DSM 1715 / NCIMB 8712) protein is Hydrogenase maturation factor HypA.